The primary structure comprises 469 residues: Tetratricopeptide repeat protein 38 (469 aa).

TPR repeat units follow at residues 107 to 140, 179 to 212, and 251 to 284; these read REMLHVAAVETFANGNLPKAADLWERILQNHPTD, SYVKGMYSFGLLETNFYDQALKVAKEALAVDQTD, and CHVYWHWALYFIEKGDYEAALTLYDNHIAPQCFA.

The protein belongs to the TTC38 family.

The sequence is that of Tetratricopeptide repeat protein 38 (ttc38) from Xenopus tropicalis (Western clawed frog).